The sequence spans 126 residues: Large ribosomal subunit protein bL20c (126 aa).

This sequence belongs to the bacterial ribosomal protein bL20 family.

It localises to the plastid. The protein resides in the chloroplast. In terms of biological role, binds directly to 23S ribosomal RNA and is necessary for the in vitro assembly process of the 50S ribosomal subunit. It is not involved in the protein synthesizing functions of that subunit. The sequence is that of Large ribosomal subunit protein bL20c from Guizotia abyssinica (Niger).